Reading from the N-terminus, the 224-residue chain is Processed variable antigen (224 aa).

Repeat copies occupy residues 1 to 6 (ETGESK), 7 to 12 (ETGESK), 13 to 18 (ETGESK), 19 to 24 (ETGESK), 25 to 30 (ETGESK), 31 to 36 (ETGESK), 37 to 42 (ETGESK), 43 to 48 (ETGESK), 49 to 54 (ETGESK), 55 to 60 (ETGESK), 61 to 66 (ETGESK), 67 to 72 (ETGESK), 73 to 78 (ETGESK), 79 to 84 (ETGESK), 85 to 90 (ETGESK), 91 to 96 (ETGESK), and 97 to 102 (ETGESK). The segment at 1 to 102 (ETGESKETGE…GESKETGESK (102 aa)) is 17 X 6 AA tandem repeats of E-T-G-E-S-K. Basic and acidic residues predominate over residues 1–137 (ETGESKETGE…TEESKDREGN (137 aa)). Residues 1–224 (ETGESKETGE…KKADNKKKKK (224 aa)) are disordered. The segment covering 144–153 (ENSENSNVTS) has biased composition (low complexity). 2 stretches are compositionally biased toward basic and acidic residues: residues 156–173 (EETK…EKLG) and 185–217 (EDPK…EKKA).

The polypeptide is Processed variable antigen (Plasmodium falciparum).